A 409-amino-acid chain; its full sequence is Ribose-phosphate pyrophosphokinase 3, chloroplastic (409 aa).

Composition is skewed to low complexity over residues 1–16 (MATA…PAAA) and 34–43 (PASAFARPSP). Residues 1-43 (MATAASASASASPAAAFGAKTRRPGPSPSPSPSPASAFARPSP) form a disordered region. The N-terminal 44 residues, 1–44 (MATAASASASASPAAAFGAKTRRPGPSPSPSPSPASAFARPSPR), are a transit peptide targeting the chloroplast. Residues Asp-229 and His-231 each contribute to the Mg(2+) site. Residues 312-327 (GRHVVIVDDLVQSGGT) form a binding of phosphoribosylpyrophosphate region.

Belongs to the ribose-phosphate pyrophosphokinase family. The cofactor is Mg(2+).

It localises to the plastid. Its subcellular location is the chloroplast. The catalysed reaction is D-ribose 5-phosphate + ATP = 5-phospho-alpha-D-ribose 1-diphosphate + AMP + H(+). The sequence is that of Ribose-phosphate pyrophosphokinase 3, chloroplastic from Oryza sativa subsp. japonica (Rice).